We begin with the raw amino-acid sequence, 287 residues long: ATP synthase subunit a (287 aa).

A run of 6 helical transmembrane segments spans residues 38 to 58, 96 to 116, 139 to 161, 187 to 207, 225 to 245, and 259 to 279; these read DSMVLALLLGGLTLLILWTAA, FIAPLGLVVFVWVFLMNAMDM, VVPTADLSTTMGLALAVLGLRFW, PLFALILGLVNLLMQVIEYVA, LVFMLIALMGGAAALSLSGVL, and LFHILVITLQAFIFMMLALIY.

It belongs to the ATPase A chain family. As to quaternary structure, F-type ATPases have 2 components, CF(1) - the catalytic core - and CF(0) - the membrane proton channel. CF(1) has five subunits: alpha(3), beta(3), gamma(1), delta(1), epsilon(1). CF(0) has three main subunits: a(1), b(2) and c(9-12). The alpha and beta chains form an alternating ring which encloses part of the gamma chain. CF(1) is attached to CF(0) by a central stalk formed by the gamma and epsilon chains, while a peripheral stalk is formed by the delta and b chains.

The protein localises to the cell inner membrane. Key component of the proton channel; it plays a direct role in the translocation of protons across the membrane. The polypeptide is ATP synthase subunit a (Verminephrobacter eiseniae (strain EF01-2)).